A 340-amino-acid chain; its full sequence is Organic solute transporter subunit alpha (340 aa).

At 1-48 (MEPGRTHIKLDPRYTAELLELLETNYSISPACFSHPPTAAQLLRALGP) the chain is on the extracellular side. An N-linked (GlcNAc...) asparagine glycan is attached at asparagine 25. A helical transmembrane segment spans residues 49 to 69 (VDIALTIILTFLTTGSVAIFL). The Cytoplasmic segment spans residues 70–87 (EDAVYLYKNTLCPIKKRT). The helical transmembrane segment at 88–108 (LIWSSSAPTVVSVFCCFGLWI) threads the bilayer. Residues 109–114 (PRALTL) are Extracellular-facing. Residues 115–135 (VEMAITSFYAVCFYLLMMVMV) form a helical membrane-spanning segment. Residues 136–181 (EGFGGKKAVLRTLKDTPMRVHTGPCCCCCPCCPPLILTRKKLQLLL) are Cytoplasmic-facing. The helical transmembrane segment at 182–202 (LGPFQYAFFKITLSIVGLFLI) threads the bilayer. Residues 203-219 (PDGIYDPGEISEKSAAL) lie on the Extracellular side of the membrane. A helical transmembrane segment spans residues 220-240 (WINNLLAVSTLLALWSLAILF). Residues 241–255 (RQAKMHLGEQNMGSK) lie on the Cytoplasmic side of the membrane. Residues 256–276 (FALFQVLVILTALQPAIFSIL) form a helical membrane-spanning segment. The Extracellular portion of the chain corresponds to 277 to 297 (ANSGQIACSPPYSSKIRSQVM). Residues 298 to 317 (NCHMLILETFLMTVLTRMYY) form a helical membrane-spanning segment. The Cytoplasmic segment spans residues 318 to 340 (RRKDDKVGYEACSLPDLDSALKA). Serine 330 bears the Phosphoserine mark.

The protein belongs to the OST-alpha family. As to quaternary structure, interacts with SLC51B. The Ost-alpha/Ost-beta complex is a heterodimer composed of alpha (SLC51A) and beta (SLC51B) subunit. Post-translationally, N-glycosylated. As to expression, present at high levels in ileum. In ileum, it is restricted to the apical domain on the mature villus enterocytes with little detectable expression in the goblet cells or crypt enterocytes (at protein level). Expressed in kidney but not in heart, brain, liver, spleen, embryo, lung, thymus, ovary nor testis.

It localises to the cell membrane. It is found in the endoplasmic reticulum membrane. It carries out the reaction taurocholate(out) = taurocholate(in). It catalyses the reaction tauroursodeoxycholate(out) = tauroursodeoxycholate(in). The catalysed reaction is glycoursodeoxycholate(out) = glycoursodeoxycholate(in). The enzyme catalyses glycocholate(out) = glycocholate(in). It carries out the reaction taurochenodeoxycholate(out) = taurochenodeoxycholate(in). It catalyses the reaction glycochenodeoxycholate(out) = glycochenodeoxycholate(in). The catalysed reaction is taurodeoxycholate(out) = taurodeoxycholate(in). The enzyme catalyses glycodeoxycholate(out) = glycodeoxycholate(in). It carries out the reaction prostaglandin E2(out) = prostaglandin E2(in). It catalyses the reaction estrone 3-sulfate(out) = estrone 3-sulfate(in). The catalysed reaction is dehydroepiandrosterone 3-sulfate(out) = dehydroepiandrosterone 3-sulfate(in). Functionally, essential component of the Ost-alpha/Ost-beta complex, a heterodimer that acts as the intestinal basolateral transporter responsible for bile acid export from enterocytes into portal blood. Efficiently transports the major species of bile acids (taurocholate). Taurine conjugates are transported more efficiently across the basolateral membrane than glycine-conjugated bile acids. Can also transport steroids such as estrone 3-sulfate and dehydroepiandrosterone 3-sulfate, therefore playing a role in the enterohepatic circulation of sterols. Able to transport eicosanoids such as prostaglandin E2. The polypeptide is Organic solute transporter subunit alpha (Slc51a) (Mus musculus (Mouse)).